The chain runs to 291 residues: T-cell leukemia homeobox protein 3 (291 aa).

The interval 1 to 56 (MEAPASAQTPHPHEPISFGIDQILNSPDQDSAPAPRGPDGASYLGGPPGGRPGATY) is disordered. A DNA-binding region (homeobox) is located at residues 166-225 (RKKPRTSFSRVQICELEKRFHRQKYLASAERAALAKSLKMTDAQVKTWFQNRRTKWRRQT).

The protein resides in the nucleus. In Homo sapiens (Human), this protein is T-cell leukemia homeobox protein 3 (TLX3).